Here is a 336-residue protein sequence, read N- to C-terminus: Dihydroorotate dehydrogenase (quinone) (336 aa).

Residues 62 to 66 (AGLDK) and Thr86 each bind FMN. Lys66 is a substrate binding site. 111 to 115 (NRMGF) is a substrate binding site. The FMN site is built by Asn139 and Asn172. Substrate is bound at residue Asn172. Ser175 acts as the Nucleophile in catalysis. Asn177 is a substrate binding site. FMN-binding residues include Lys217 and Thr245. 246–247 (NT) contributes to the substrate binding site. FMN is bound by residues Gly268, Gly297, and 318 to 319 (YS).

This sequence belongs to the dihydroorotate dehydrogenase family. Type 2 subfamily. As to quaternary structure, monomer. FMN is required as a cofactor.

The protein resides in the cell membrane. The enzyme catalyses (S)-dihydroorotate + a quinone = orotate + a quinol. The protein operates within pyrimidine metabolism; UMP biosynthesis via de novo pathway; orotate from (S)-dihydroorotate (quinone route): step 1/1. Its function is as follows. Catalyzes the conversion of dihydroorotate to orotate with quinone as electron acceptor. The protein is Dihydroorotate dehydrogenase (quinone) of Salmonella agona (strain SL483).